Here is a 232-residue protein sequence, read N- to C-terminus: Phosphatidylserine decarboxylase proenzyme (232 aa).

Serine 190 (schiff-base intermediate with substrate; via pyruvic acid) is an active-site residue. Serine 190 is subject to Pyruvic acid (Ser); by autocatalysis.

It belongs to the phosphatidylserine decarboxylase family. PSD-A subfamily. As to quaternary structure, heterodimer of a large membrane-associated beta subunit and a small pyruvoyl-containing alpha subunit. It depends on pyruvate as a cofactor. In terms of processing, is synthesized initially as an inactive proenzyme. Formation of the active enzyme involves a self-maturation process in which the active site pyruvoyl group is generated from an internal serine residue via an autocatalytic post-translational modification. Two non-identical subunits are generated from the proenzyme in this reaction, and the pyruvate is formed at the N-terminus of the alpha chain, which is derived from the carboxyl end of the proenzyme. The post-translation cleavage follows an unusual pathway, termed non-hydrolytic serinolysis, in which the side chain hydroxyl group of the serine supplies its oxygen atom to form the C-terminus of the beta chain, while the remainder of the serine residue undergoes an oxidative deamination to produce ammonia and the pyruvoyl prosthetic group on the alpha chain.

Its subcellular location is the cell membrane. It catalyses the reaction a 1,2-diacyl-sn-glycero-3-phospho-L-serine + H(+) = a 1,2-diacyl-sn-glycero-3-phosphoethanolamine + CO2. It participates in phospholipid metabolism; phosphatidylethanolamine biosynthesis; phosphatidylethanolamine from CDP-diacylglycerol: step 2/2. In terms of biological role, catalyzes the formation of phosphatidylethanolamine (PtdEtn) from phosphatidylserine (PtdSer). The chain is Phosphatidylserine decarboxylase proenzyme from Bradyrhizobium sp. (strain BTAi1 / ATCC BAA-1182).